We begin with the raw amino-acid sequence, 297 residues long: HTH-type transcriptional regulator ArgP (297 aa).

Residues 4–60 enclose the HTH lysR-type domain; that stretch reads PDYRTLQALDAVIRERGFERAAQKLCITQSAVSQRIKQLENLFGQPLLVRTIPPRPT. Residues 21–40 constitute a DNA-binding region (H-T-H motif); that stretch reads FERAAQKLCITQSAVSQRIK.

Belongs to the LysR transcriptional regulatory family. Homodimer.

Controls the transcription of genes involved in arginine and lysine metabolism. This is HTH-type transcriptional regulator ArgP from Pectobacterium carotovorum subsp. carotovorum (strain PC1).